The sequence spans 1585 residues: Sterol 3-beta-glucosyltransferase (1585 aa).

The segment covering 1-18 has biased composition (pro residues); that stretch reads MSPPISPTPPPLQPPFPP. 3 disordered regions span residues 1-154, 177-225, and 249-279; these read MSPP…CDFR, PWEE…PTHT, and YQYA…LPKG. 3 stretches are compositionally biased toward polar residues: residues 65–77, 105–123, and 132–148; these read DQAT…SLIP, DAQT…STHE, and PRTS…QMAE. The segment covering 178-194 has biased composition (acidic residues); it reads WEEDDDSDDGEDDDEFI. Over residues 255 to 273 the composition is skewed to low complexity; sequence ETSSRRTSAAGSESSSEGE. A GRAM 1 domain is found at 387-555; it reads ERLMEVFGLE…EAIVDVEKSP (169 aa). Residues 438-530 form the PH domain; that stretch reads LLVKSGPLHK…WVKAIQKVMF (93 aa). 2 disordered regions span residues 625-645 and 666-852; these read TSHA…LGMA and DGEP…GSES. Residues 670 to 689 show a composition bias toward basic and acidic residues; the sequence is LEEHSQGPHHNDEDASHLPH. 3 stretches are compositionally biased toward polar residues: residues 760 to 785, 806 to 817, and 827 to 840; these read TDSS…QASV, NKPSVVDSNSAE, and SWTS…QMVK. A GRAM 2 domain is found at 862–933; that stretch reads RKFRTFFALS…RDLYGLKAQK (72 aa). UDP-alpha-D-glucose contacts are provided by Ser1043, Arg1044, Asp1046, Ile1358, His1360, His1373, Gly1377, Thr1378, Asp1397, and Gln1398. Residues 1499–1555 are disordered; that stretch reads NRVRSRSRSRSRSSQGRFSPRRHTVDDDGWSVVSGGSRSRSGSASAVTSPERRPLNI. Residues 1529–1545 show a composition bias toward low complexity; that stretch reads SVVSGGSRSRSGSASAV.

Belongs to the glycosyltransferase 28 family.

Its subcellular location is the cytoplasm. It is found in the membrane. It catalyses the reaction a sterol + UDP-alpha-D-glucose = a sterol 3-beta-D-glucoside + UDP + H(+). The catalysed reaction is ergosterol + UDP-alpha-D-glucose = ergosteryl 3-beta-D-glucoside + UDP + H(+). Sterol glycosyltransferase responsible for the glycosylation of ergosterol to form ergosterol-glucoside. The sequence is that of Sterol 3-beta-glucosyltransferase from Cryptococcus neoformans var. neoformans serotype D (strain JEC21 / ATCC MYA-565) (Filobasidiella neoformans).